We begin with the raw amino-acid sequence, 1481 residues long: Cystic fibrosis transmembrane conductance regulator (1481 aa).

Residues Met-1–Phe-77 lie on the Cytoplasmic side of the membrane. A helical membrane pass occupies residues Phe-78–Gln-98. The 285-residue stretch at Phe-81–Leu-365 folds into the ABC transmembrane type-1 1 domain. Residues Pro-99–Tyr-122 lie on the Extracellular side of the membrane. The helical transmembrane segment at Leu-123–His-146 threads the bilayer. At His-147–Leu-195 the chain is on the cytoplasmic side. The helical transmembrane segment at Ala-196–Trp-216 threads the bilayer. The Extracellular segment spans residues Glu-217–Ser-222. Residues Ala-223 to Met-243 traverse the membrane as a helical segment. The Cytoplasmic portion of the chain corresponds to Met-244 to Lys-298. A helical membrane pass occupies residues Ala-299 to Phe-319. Over Leu-320–Thr-339 the chain is Extracellular. Residues Ile-340–Val-358 form a helical membrane-spanning segment. The Cytoplasmic portion of the chain corresponds to Gln-359–Ser-858. ATP-binding positions include Trp-401, Ser-434, Gly-458–Thr-465, and Gln-493. An ABC transporter 1 domain is found at Asn-423–Gly-646. The S-palmitoyl cysteine moiety is linked to residue Cys-524. A phosphoserine mark is found at Ser-549 and Ser-660. The tract at residues Ser-654–Glu-831 is disordered R region. The residue at position 670 (Ser-670) is a Phosphoserine; by PKA. Ser-686 is subject to Phosphoserine. Lys-688 participates in a covalent cross-link: Glycyl lysine isopeptide (Lys-Gly) (interchain with G-Cter in ubiquitin). Residues Ser-700 and Ser-712 each carry the phosphoserine modification. Residue Thr-717 is modified to Phosphothreonine. Phosphoserine is present on residues Ser-737, Ser-753, Ser-768, Ser-790, Ser-795, and Ser-813. Residues Leu-859–Val-879 form a helical membrane-spanning segment. The region spanning Leu-859–Ser-1155 is the ABC transmembrane type-1 2 domain. The Extracellular portion of the chain corresponds to Val-880–Ile-918. N-linked (GlcNAc...) asparagine glycans are attached at residues Asn-894 and Asn-900. Residues Tyr-919–His-939 form a discontinuously helical membrane-spanning segment. Topologically, residues Thr-940–Thr-990 are cytoplasmic. A helical transmembrane segment spans residues Ile-991–Leu-1011. At Gln-1012–Pro-1013 the chain is on the extracellular side. The helical transmembrane segment at Tyr-1014 to Leu-1034 threads the bilayer. Residues Gln-1035–Thr-1095 are Cytoplasmic-facing. The chain crosses the membrane as a helical span at residues Leu-1096 to Phe-1116. Over Ile-1117–Gly-1130 the chain is Extracellular. Residues Ile-1131 to Ile-1151 form a helical membrane-spanning segment. The Cytoplasmic segment spans residues Asp-1152–Leu-1481. Residues Met-1211 to Pro-1444 enclose the ABC transporter 2 domain. Residues Tyr-1220 and Gly-1245–Ser-1252 each bind ATP. The tract at residues Arg-1387–Leu-1481 is interaction with GORASP2. A lipid anchor (S-palmitoyl cysteine) is attached at Cys-1396. Ser-1445 and Ser-1457 each carry phosphoserine. A PDZ-binding motif is present at residues Thr-1479–Leu-1481.

This sequence belongs to the ABC transporter superfamily. ABCC family. CFTR transporter (TC 3.A.1.202) subfamily. Monomer; does not require oligomerization for channel activity. May form oligomers in the membrane. Interacts with SLC26A3, SLC26A6 and NHERF1. Interacts with SHANK2. Interacts with MYO6. Interacts (via C-terminus) with GOPC (via PDZ domain); this promotes CFTR internalization and thereby decreases channel activity. Interacts with SLC4A7 through NHERF1. Found in a complex with MYO5B and RAB11A. Interacts with ANO1. Interacts with SLC26A8. Interacts with AHCYL1; the interaction increases CFTR activity. Interacts with CSE1L. The core-glycosylated form interacts with GORASP2 (via PDZ GRASP-type 1 domain) in respone to ER stress. Interacts with MARCHF2; the interaction leads to CFTR ubiqtuitination and degradation. Interacts with ADGRG2. Post-translationally, N-glycosylated. In terms of processing, phosphorylated; cAMP treatment promotes phosphorylation and activates the channel. Dephosphorylation decreases the ATPase activity (in vitro). Phosphorylation at PKA sites activates the channel. Phosphorylation at PKC sites enhances the response to phosphorylation by PKA. Phosphorylated by AMPK; this inhibits channel activity. Ubiquitinated, leading to its degradation in the lysosome. Deubiquitination by USP10 in early endosomes enhances its endocytic recycling to the cell membrane. Ubiquitinated by RNF185 during ER stress. Ubiquitinated by MARCHF2.

Its subcellular location is the apical cell membrane. The protein resides in the early endosome membrane. It is found in the cell membrane. The protein localises to the recycling endosome membrane. It localises to the endoplasmic reticulum membrane. Its subcellular location is the nucleus. The enzyme catalyses ATP + H2O + closed Cl(-) channel = ADP + phosphate + open Cl(-) channel.. It carries out the reaction chloride(in) = chloride(out). The catalysed reaction is hydrogencarbonate(in) = hydrogencarbonate(out). It catalyses the reaction ATP + H2O = ADP + phosphate + H(+). In terms of biological role, epithelial ion channel that plays an important role in the regulation of epithelial ion and water transport and fluid homeostasis. Mediates the transport of chloride ions across the cell membrane. Possesses an intrinsic ATPase activity and utilizes ATP to gate its channel; the passive flow of anions through the channel is gated by cycles of ATP binding and hydrolysis by the ATP-binding domains. The ion channel is also permeable to HCO(3)(-); selectivity depends on the extracellular chloride concentration. Exerts its function also by modulating the activity of other ion channels and transporters. Contributes to the regulation of the pH and the ion content of the epithelial fluid layer. Modulates the activity of the epithelial sodium channel (ENaC) complex, in part by regulating the cell surface expression of the ENaC complex. May regulate bicarbonate secretion and salvage in epithelial cells by regulating the transporter SLC4A7. Can inhibit the chloride channel activity of ANO1. Plays a role in the chloride and bicarbonate homeostasis during sperm epididymal maturation and capacitation. The sequence is that of Cystic fibrosis transmembrane conductance regulator from Macaca nemestrina (Pig-tailed macaque).